The primary structure comprises 133 residues: Ribonuclease P protein component (133 aa).

Belongs to the RnpA family. Consists of a catalytic RNA component (M1 or rnpB) and a protein subunit.

The enzyme catalyses Endonucleolytic cleavage of RNA, removing 5'-extranucleotides from tRNA precursor.. Its function is as follows. RNaseP catalyzes the removal of the 5'-leader sequence from pre-tRNA to produce the mature 5'-terminus. It can also cleave other RNA substrates such as 4.5S RNA. The protein component plays an auxiliary but essential role in vivo by binding to the 5'-leader sequence and broadening the substrate specificity of the ribozyme. This Pseudomonas putida (strain ATCC 47054 / DSM 6125 / CFBP 8728 / NCIMB 11950 / KT2440) protein is Ribonuclease P protein component.